A 442-amino-acid chain; its full sequence is Putative pyrimidine permease RutG (442 aa).

At 1–57 (MAMFGFPHWQLKSTSTESGVVAPDERLPFAQTAVMGVQHAVAMFGATVLMPILMGLD) the chain is on the cytoplasmic side. Residues 58 to 78 (PNLSILMSGIGTLLFFFITGG) traverse the membrane as a helical segment. Position 79 (R79) is a topological domain, periplasmic. A helical transmembrane segment spans residues 80-100 (VPSYLGSSAAFVGVVIAATGF). The Cytoplasmic segment spans residues 101-110 (NGQGINPNIS). The helical transmembrane segment at 111–131 (IALGGIIACGLVYTVIGLVVM) threads the bilayer. Residues 132 to 140 (KIGTRWIER) are Periplasmic-facing. The chain crosses the membrane as a helical span at residues 141 to 161 (LMPPVVTGAVVMAIGLNLAPI). The Cytoplasmic portion of the chain corresponds to 162 to 169 (AVKSVSAS). A helical membrane pass occupies residues 170–190 (AFDSWMAVMTVLCIGLVAVFT). The Periplasmic segment spans residues 191 to 196 (RGMIQR). A helical transmembrane segment spans residues 197 to 217 (LLILVGLIVACLLYGVMTNVL). Topologically, residues 218–240 (GLGKAVDFTLVSHAAWFGLPHFS) are cytoplasmic. A helical transmembrane segment spans residues 241–261 (TPAFNGQAMMLIAPVAVILVA). At 262 to 284 (ENLGHLKAVAGMTGRNMDPYMGR) the chain is on the periplasmic side. Residues 285 to 305 (AFVGDGLATMLSGSVGGSGVT) traverse the membrane as a helical segment. Over 306–318 (TYAENIGVMAVTK) the chain is Cytoplasmic. A helical membrane pass occupies residues 319 to 339 (VYSTLVFVAAAVIAMLLGFSP). Residues 340 to 347 (KFGALIHT) lie on the Periplasmic side of the membrane. The chain crosses the membrane as a helical span at residues 348 to 368 (IPAAVIGGASIVVFGLIAVAG). Residues 369–385 (ARIWVQNRVDLSQNGNL) lie on the Cytoplasmic side of the membrane. 2 helical membrane-spanning segments follow: residues 386-406 (IMVA…LGGF) and 407-427 (TLGG…LLSR). The Cytoplasmic portion of the chain corresponds to 428-442 (KLVDVPPPEVVHQEP).

It belongs to the nucleobase:cation symporter-2 (NCS2) (TC 2.A.40) family.

It is found in the cell inner membrane. Functionally, may function as a proton-driven pyrimidine uptake system. The polypeptide is Putative pyrimidine permease RutG (rutG) (Escherichia coli (strain K12)).